The following is a 379-amino-acid chain: Flap endonuclease 1 (379 aa).

The segment at 1–105 (MGVKGLNQLI…GELEKRLLRR (105 aa)) is N-domain. D34 serves as a coordination point for Mg(2+). The DNA site is built by R47 and R71. Residues D87, E159, E161, D180, and D182 each coordinate Mg(2+). The tract at residues 123 to 254 (DMVRYEKRTV…VTAFKLIKEH (132 aa)) is I-domain. DNA is bound at residue E159. Residues G232 and D234 each contribute to the DNA site. A Mg(2+)-binding site is contributed by D234. The tract at residues 341-349 (VQGRLDGFF) is interaction with PCNA. The segment at 344–379 (RLDGFFQSVPKPKDSADKKRKNDTKSAKSKKAKTRK) is disordered. A compositionally biased stretch (basic residues) spans 361 to 379 (KKRKNDTKSAKSKKAKTRK).

This sequence belongs to the XPG/RAD2 endonuclease family. FEN1 subfamily. Interacts with PCNA. Three molecules of FEN1 bind to one PCNA trimer with each molecule binding to one PCNA monomer. PCNA stimulates the nuclease activity without altering cleavage specificity. Mg(2+) is required as a cofactor. Post-translationally, phosphorylated. Phosphorylation upon DNA damage induces relocalization to the nuclear plasma.

The protein resides in the nucleus. The protein localises to the nucleolus. It is found in the nucleoplasm. Its subcellular location is the mitochondrion. Functionally, structure-specific nuclease with 5'-flap endonuclease and 5'-3' exonuclease activities involved in DNA replication and repair. During DNA replication, cleaves the 5'-overhanging flap structure that is generated by displacement synthesis when DNA polymerase encounters the 5'-end of a downstream Okazaki fragment. It enters the flap from the 5'-end and then tracks to cleave the flap base, leaving a nick for ligation. Also involved in the long patch base excision repair (LP-BER) pathway, by cleaving within the apurinic/apyrimidinic (AP) site-terminated flap. Acts as a genome stabilization factor that prevents flaps from equilibrating into structures that lead to duplications and deletions. Also possesses 5'-3' exonuclease activity on nicked or gapped double-stranded DNA, and exhibits RNase H activity. Also involved in replication and repair of rDNA and in repairing mitochondrial DNA. This chain is Flap endonuclease 1, found in Debaryomyces hansenii (strain ATCC 36239 / CBS 767 / BCRC 21394 / JCM 1990 / NBRC 0083 / IGC 2968) (Yeast).